The following is a 763-amino-acid chain: 1,4-alpha-glucan branching enzyme GlgB (763 aa).

Asp-437 functions as the Nucleophile in the catalytic mechanism. Glu-488 (proton donor) is an active-site residue.

It belongs to the glycosyl hydrolase 13 family. GlgB subfamily. As to quaternary structure, monomer.

It carries out the reaction Transfers a segment of a (1-&gt;4)-alpha-D-glucan chain to a primary hydroxy group in a similar glucan chain.. It participates in glycan biosynthesis; glycogen biosynthesis. In terms of biological role, catalyzes the formation of the alpha-1,6-glucosidic linkages in glycogen by scission of a 1,4-alpha-linked oligosaccharide from growing alpha-1,4-glucan chains and the subsequent attachment of the oligosaccharide to the alpha-1,6 position. This Synechococcus sp. (strain JA-2-3B'a(2-13)) (Cyanobacteria bacterium Yellowstone B-Prime) protein is 1,4-alpha-glucan branching enzyme GlgB.